Consider the following 152-residue polypeptide: MTLTFPAPSKDKAELETGPAFTPRFDEKGLVTAVVTDARDGELLMVAHMNAEALALTIETGIAHYYSRSRNSLWKKGESSGNTQAVQEIRTDCDQDAIWLKVTVAGHDATCHTGRRSCFYRTVGVENGKARVTITDEHRHFDPAQIYAEKKG.

Asp-92 serves as a coordination point for Mg(2+). Position 93 (Cys-93) interacts with Zn(2+). Mg(2+) contacts are provided by Asp-94 and Asp-96. 2 residues coordinate Zn(2+): Cys-111 and Cys-118.

This sequence belongs to the PRA-CH family. Homodimer. It depends on Mg(2+) as a cofactor. Zn(2+) serves as cofactor.

The protein localises to the cytoplasm. It carries out the reaction 1-(5-phospho-beta-D-ribosyl)-5'-AMP + H2O = 1-(5-phospho-beta-D-ribosyl)-5-[(5-phospho-beta-D-ribosylamino)methylideneamino]imidazole-4-carboxamide. It functions in the pathway amino-acid biosynthesis; L-histidine biosynthesis; L-histidine from 5-phospho-alpha-D-ribose 1-diphosphate: step 3/9. Its function is as follows. Catalyzes the hydrolysis of the adenine ring of phosphoribosyl-AMP. In Sinorhizobium fredii (strain NBRC 101917 / NGR234), this protein is Phosphoribosyl-AMP cyclohydrolase.